The following is a 366-amino-acid chain: Aminomethyltransferase (366 aa).

This sequence belongs to the GcvT family. As to quaternary structure, the glycine cleavage system is composed of four proteins: P, T, L and H.

The enzyme catalyses N(6)-[(R)-S(8)-aminomethyldihydrolipoyl]-L-lysyl-[protein] + (6S)-5,6,7,8-tetrahydrofolate = N(6)-[(R)-dihydrolipoyl]-L-lysyl-[protein] + (6R)-5,10-methylene-5,6,7,8-tetrahydrofolate + NH4(+). Functionally, the glycine cleavage system catalyzes the degradation of glycine. The chain is Aminomethyltransferase from Bordetella parapertussis (strain 12822 / ATCC BAA-587 / NCTC 13253).